Consider the following 206-residue polypeptide: Large ribosomal subunit protein eL13y (206 aa).

The disordered stretch occupies residues 182-206 (LERTNKRHAGARAKRAADAEKEEKK). Over residues 186-195 (NKRHAGARAK) the composition is skewed to basic residues. Positions 196 to 206 (RAADAEKEEKK) are enriched in basic and acidic residues.

It belongs to the eukaryotic ribosomal protein eL13 family.

The polypeptide is Large ribosomal subunit protein eL13y (Brassica napus (Rape)).